The sequence spans 177 residues: ATP-dependent protease subunit HslV (177 aa).

Thr-7 is a catalytic residue. Na(+) contacts are provided by Ala-162, Cys-165, and Thr-168.

Belongs to the peptidase T1B family. HslV subfamily. As to quaternary structure, a double ring-shaped homohexamer of HslV is capped on each side by a ring-shaped HslU homohexamer. The assembly of the HslU/HslV complex is dependent on binding of ATP.

The protein resides in the cytoplasm. The catalysed reaction is ATP-dependent cleavage of peptide bonds with broad specificity.. Its activity is regulated as follows. Allosterically activated by HslU binding. Protease subunit of a proteasome-like degradation complex believed to be a general protein degrading machinery. The chain is ATP-dependent protease subunit HslV from Leptospira biflexa serovar Patoc (strain Patoc 1 / Ames).